The sequence spans 134 residues: Ribonuclease VapC40 (134 aa).

Residues 3–126 (APDTSVLVAG…LRAVETYERL (124 aa)) enclose the PINc domain. Mg(2+)-binding residues include Asp-5 and Asp-98.

This sequence belongs to the PINc/VapC protein family. Mg(2+) serves as cofactor.

Its function is as follows. Toxic component of a type II toxin-antitoxin (TA) system. An RNase. Its cognate antitoxin is VapB40. In Mycobacterium tuberculosis (strain CDC 1551 / Oshkosh), this protein is Ribonuclease VapC40.